The following is a 320-amino-acid chain: tRNA dimethylallyltransferase (320 aa).

17–24 contributes to the ATP binding site; sequence GPTASGKT. Substrate is bound at residue 19–24; sequence TASGKT. 3 interaction with substrate tRNA regions span residues 42-45, 166-170, and 249-254; these read DSAL, QRIQR, and RCVGYR.

It belongs to the IPP transferase family. As to quaternary structure, monomer. Mg(2+) is required as a cofactor.

It catalyses the reaction adenosine(37) in tRNA + dimethylallyl diphosphate = N(6)-dimethylallyladenosine(37) in tRNA + diphosphate. Its function is as follows. Catalyzes the transfer of a dimethylallyl group onto the adenine at position 37 in tRNAs that read codons beginning with uridine, leading to the formation of N6-(dimethylallyl)adenosine (i(6)A). This is tRNA dimethylallyltransferase from Herminiimonas arsenicoxydans.